A 222-amino-acid chain; its full sequence is MAEQAGAGSAQDNRGGGRDDRGGRGRRDDRGGRGGRDDREKSNYLERVVTINRVSKVVKGGRRFSFTALVIVGDGKGMVGVGYGKAKEVPAAIAKGVEEARKNFFRVPLIGGTVTHPVQGEAAAGVVMLRPASPGTGVIAGGACRAVLECAGVHDVLAKSLGSDNAINVVHATVAALKLLQRPEEVAARRGLPIEDVAPAGMLRARREAEALAVSAAREGTA.

The segment at Met-1 to Lys-41 is disordered. The segment covering Gly-15–Lys-41 has biased composition (basic and acidic residues). Residues Tyr-44–Val-107 enclose the S5 DRBM domain.

This sequence belongs to the universal ribosomal protein uS5 family. Part of the 30S ribosomal subunit. Contacts proteins S4 and S8.

With S4 and S12 plays an important role in translational accuracy. Its function is as follows. Located at the back of the 30S subunit body where it stabilizes the conformation of the head with respect to the body. This chain is Small ribosomal subunit protein uS5, found in Mycolicibacterium gilvum (strain PYR-GCK) (Mycobacterium gilvum (strain PYR-GCK)).